A 363-amino-acid chain; its full sequence is Pyrimidine monooxygenase RutA (363 aa).

FMN-binding positions include 49-50 (IK), N115, E124, 140-141 (RY), and S190.

Belongs to the NtaA/SnaA/DszA monooxygenase family. RutA subfamily.

It carries out the reaction uracil + FMNH2 + NADH + O2 = (Z)-3-ureidoacrylate + FMN + NAD(+) + H2O + H(+). It catalyses the reaction thymine + FMNH2 + NADH + O2 = (Z)-2-methylureidoacrylate + FMN + NAD(+) + H2O + H(+). Functionally, catalyzes the pyrimidine ring opening between N-3 and C-4 by an unusual flavin hydroperoxide-catalyzed mechanism, adding oxygen atoms in the process to yield ureidoacrylate peracid, that immediately reacts with FMN forming ureidoacrylate and FMN-N(5)-oxide. The FMN-N(5)-oxide reacts spontaneously with NADH to produce FMN. Requires the flavin reductase RutF to regenerate FMN in vivo. This is Pyrimidine monooxygenase RutA from Klebsiella variicola (strain At-22).